The following is a 286-amino-acid chain: Phosphatidylserine decarboxylase proenzyme (286 aa).

Residues aspartate 90, histidine 147, and serine 250 each act as charge relay system; for autoendoproteolytic cleavage activity in the active site. Residue serine 250 is the Schiff-base intermediate with substrate; via pyruvic acid; for decarboxylase activity of the active site. A Pyruvic acid (Ser); by autocatalysis modification is found at serine 250.

The protein belongs to the phosphatidylserine decarboxylase family. PSD-B subfamily. Prokaryotic type I sub-subfamily. In terms of assembly, heterodimer of a large membrane-associated beta subunit and a small pyruvoyl-containing alpha subunit. The cofactor is pyruvate. Is synthesized initially as an inactive proenzyme. Formation of the active enzyme involves a self-maturation process in which the active site pyruvoyl group is generated from an internal serine residue via an autocatalytic post-translational modification. Two non-identical subunits are generated from the proenzyme in this reaction, and the pyruvate is formed at the N-terminus of the alpha chain, which is derived from the carboxyl end of the proenzyme. The autoendoproteolytic cleavage occurs by a canonical serine protease mechanism, in which the side chain hydroxyl group of the serine supplies its oxygen atom to form the C-terminus of the beta chain, while the remainder of the serine residue undergoes an oxidative deamination to produce ammonia and the pyruvoyl prosthetic group on the alpha chain. During this reaction, the Ser that is part of the protease active site of the proenzyme becomes the pyruvoyl prosthetic group, which constitutes an essential element of the active site of the mature decarboxylase.

The protein localises to the cell membrane. The enzyme catalyses a 1,2-diacyl-sn-glycero-3-phospho-L-serine + H(+) = a 1,2-diacyl-sn-glycero-3-phosphoethanolamine + CO2. It functions in the pathway phospholipid metabolism; phosphatidylethanolamine biosynthesis; phosphatidylethanolamine from CDP-diacylglycerol: step 2/2. In terms of biological role, catalyzes the formation of phosphatidylethanolamine (PtdEtn) from phosphatidylserine (PtdSer). The polypeptide is Phosphatidylserine decarboxylase proenzyme (Saccharophagus degradans (strain 2-40 / ATCC 43961 / DSM 17024)).